A 732-amino-acid chain; its full sequence is Integrator complex subunit 13 (732 aa).

Over residues 564–648 the composition is skewed to basic and acidic residues; the sequence is PPEEEERKKR…DETPHMEKSK (85 aa). Residues 564–650 form a disordered region; the sequence is PPEEEERKKR…TPHMEKSKGP (87 aa). The Nuclear localization signal (NLS) signature appears at 572–582; that stretch reads KRGRKREDRED. Residue K611 forms a Glycyl lysine isopeptide (Lys-Gly) (interchain with G-Cter in SUMO2) linkage. A phosphoserine mark is found at S623, S626, and S678. Positions 649–694 are cleavage module binding motif (CMBM); that stretch reads GPVSLLSLWSNRINTANSRKHQEFAGRLNSVNNRAELYQHLKEENG.

This sequence belongs to the Integrator subunit 13 family. Component of the Integrator complex, composed of core subunits INTS1, INTS2, INTS3, INTS4, INTS5, INTS6, INTS7, INTS8, INTS9/RC74, INTS10, INTS11/CPSF3L, INTS12, INTS13, INTS14 and INTS15. The core complex associates with protein phosphatase 2A subunits PPP2CA and PPP2R1A, to form the Integrator-PP2A (INTAC) complex. INTS13 is part of the tail subcomplex, composed of INTS10, INTS13, INTS14 and INTS15. Interacts with transcription factors ZNF609 and ZNF655. Interacts with PAFAH1B1; this interaction may be required for proper recruitment of dynein complexes to the nuclear envelope at prophase.

It localises to the nucleus. The protein resides in the cytoplasm. Its function is as follows. Component of the integrator complex, a multiprotein complex that terminates RNA polymerase II (Pol II) transcription in the promoter-proximal region of genes. The integrator complex provides a quality checkpoint during transcription elongation by driving premature transcription termination of transcripts that are unfavorably configured for transcriptional elongation: the complex terminates transcription by (1) catalyzing dephosphorylation of the C-terminal domain (CTD) of Pol II subunit POLR2A/RPB1 and SUPT5H/SPT5, (2) degrading the exiting nascent RNA transcript via endonuclease activity and (3) promoting the release of Pol II from bound DNA. The integrator complex is also involved in terminating the synthesis of non-coding Pol II transcripts, such as enhancer RNAs (eRNAs), small nuclear RNAs (snRNAs), telomerase RNAs and long non-coding RNAs (lncRNAs). Within the integrator complex, INTS13 is part of the integrator tail module and acts as a platform for the recruitment of transcription factors at promoters. At prophase, mediates recruitment of cytoplasmic dynein to the nuclear envelope, a step important for proper centrosome-nucleus coupling. At G2/M phase, may be required for proper spindle formation and execution of cytokinesis. The polypeptide is Integrator complex subunit 13 (Mus musculus (Mouse)).